Here is a 642-residue protein sequence, read N- to C-terminus: MADDTGTEEGLGCSGWFSVEAIVERTTENTISDDEDENVEDSGLDLVDFVDDSRIIPTNQLKAQALLNRQQAHADKEAVQALKRKLLGSPYESPASDLQESINKELSPRLGGLQLCRGSQGAKRRLFQSLENRDSGYGYSEVEIRQEQVENGHGAPDGSMGNGGGMGSVHGVQENQEIGTNTPTTRVVELLKCKNLQATLLGKFKELFGLSFGDLVRQFKSDKSSCTDWVVAAFGVHHSIAEGFNTLIKAEALYTHIQWLTCTWGMVLLMLIRFKCGKNRTTVSKGMCKLLNIPANQLLIEPPRLQSVAAAIYWFRAGISNASVVTGETPEWIQRQTIVEHCFADTQFNLTEMVQWAYDNDLTEDSDIAYEYAQRADTDSNAAAFLKSNCQAKYVKDCGIMCRHYKKAQMKRMSMPQWIKHRSERTGDNGDWRPIVKFIRYQGIDFLTFMSAFKKFLHNIPKKSCLVLIGPPNTGKSQFGMSLVKFLAGTVISFVNSHSHFWLQPLDSAKIAMLDDATPPCWTYLDTYLRNLLDGNPCSIDRKHKALTVVKCPPLIITSNTDIRTEDRWKYLYSRISLFEFPNPFPLDKNGNPVYVLNDENWKSFFQRLWSSLEFQESEDEEENGDTGQTFRCVPGTVVRTV.

The Nuclear localization signal motif lies at 83-85 (KRK). Phosphoserine; by host occurs at positions 89, 93, and 107. A Nuclear export signal motif is present at residues 106-115 (LSPRLGGLQL). The segment at 179–345 (GTNTPTTRVV…QTIVEHCFAD (167 aa)) is DNA-binding region. Residues 444–594 (IDFLTFMSAF…FPLDKNGNPV (151 aa)) form the SF3 helicase domain. 470 to 477 (GPPNTGKS) is an ATP binding site. A Glycyl lysine isopeptide (Lys-Gly) (interchain with G-Cter in SUMO) cross-link involves residue K551.

It belongs to the papillomaviridae E1 protein family. In terms of assembly, can form hexamers. Interacts with E2 protein; this interaction increases E1 DNA binding specificity. Interacts with host DNA polymerase subunit POLA2. Interacts with host single stranded DNA-binding protein RPA1. Interacts with host TOP1; this interaction stimulates the enzymatic activity of TOP1. In terms of processing, phosphorylated. Sumoylated.

The protein resides in the host nucleus. The enzyme catalyses Couples ATP hydrolysis with the unwinding of duplex DNA by translocating in the 3'-5' direction.. It carries out the reaction ATP + H2O = ADP + phosphate + H(+). ATP-dependent DNA 3'-5' helicase required for initiation of viral DNA replication. It forms a complex with the viral E2 protein. The E1-E2 complex binds to the replication origin which contains binding sites for both proteins. During the initial step, a dimer of E1 interacts with a dimer of protein E2 leading to a complex that binds the viral origin of replication with high specificity. Then, a second dimer of E1 displaces the E2 dimer in an ATP-dependent manner to form the E1 tetramer. Following this, two E1 monomers are added to each half of the site, which results in the formation of two E1 trimers on the viral ori. Subsequently, two hexamers will be created. The double hexamer acts as a bi-directional helicase machinery and unwinds the viral DNA and then recruits the host DNA polymerase to start replication. The protein is Replication protein E1 of Human papillomavirus type 32.